The sequence spans 562 residues: Putative transport protein YE1478 (562 aa).

A run of 6 helical transmembrane segments spans residues 8-28, 32-52, 66-86, 94-114, 118-138, and 158-178; these read LLNG…LCLG, LGPI…LLGQ, FMLF…SIFF, MLAL…GKLF, IGLT…LVGA, and NLSL…ILGA. 2 RCK C-terminal domains span residues 202–288 and 290–373; these read LDTD…SFRN and KEVF…KIGF. Transmembrane regions (helical) follow at residues 383-403, 406-426, 447-467, 475-495, and 541-561; these read LLAF…TFQF, FSFG…LGFL, FGLM…INSS, MLIS…IFGA, and IANV…PGIL.

This sequence belongs to the AAE transporter (TC 2.A.81) family. YbjL subfamily.

The protein localises to the cell membrane. This chain is Putative transport protein YE1478, found in Yersinia enterocolitica serotype O:8 / biotype 1B (strain NCTC 13174 / 8081).